A 211-amino-acid chain; its full sequence is Interleukin-6 (211 aa).

Residues 1-24 (MKFLSARDFHPVAFLGLMLVTTTA) form the signal peptide. Intrachain disulfides connect C70–C76 and C99–C109.

It belongs to the IL-6 superfamily. In terms of assembly, component of a hexamer of two molecules each of IL6, IL6R and IL6ST; first binds to IL6R to associate with the signaling subunit IL6ST. Interacts with IL6R (via the N-terminal ectodomain); this interaction may be affected by IL6R-binding with SORL1, hence decreasing IL6 cis signaling. Interacts with SORL1 (via the N-terminal ectodomain); this interaction leads to IL6 internalization and lysosomal degradation. May form a trimeric complex with the soluble SORL1 ectodomain and soluble IL6R receptor; this interaction might stabilize circulating IL6, hence promoting IL6 trans signaling. In terms of processing, N- and O-glycosylated. In terms of tissue distribution, expressed by dendritic cells and macrophages. Expressed by activated follicular B cells. Abundantly expressed in the central nervous system (CNS), particularly the hypothalamic region.

The protein resides in the secreted. Functionally, cytokine with a wide variety of biological functions in immunity, tissue regeneration, and metabolism. Binds to IL6R, then the complex associates to the signaling subunit IL6ST/gp130 to trigger the intracellular IL6-signaling pathway. The interaction with the membrane-bound IL6R and IL6ST stimulates 'classic signaling', whereas the binding of IL6 and soluble IL6R to IL6ST stimulates 'trans-signaling'. Alternatively, 'cluster signaling' occurs when membrane-bound IL6:IL6R complexes on transmitter cells activate IL6ST receptors on neighboring receiver cells. In terms of biological role, IL6 is a potent inducer of the acute phase response. Rapid production of IL6 contributes to host defense during infection and tissue injury, but excessive IL6 synthesis is involved in disease pathology. In the innate immune response, is synthesized by myeloid cells, such as macrophages and dendritic cells, upon recognition of pathogens through toll-like receptors (TLRs) at the site of infection or tissue injury. In the adaptive immune response, is required for the differentiation of B-cells into immunoglolin-secreting cells. Plays a major role in the differentiation of CD4(+) T cell subsets. Essential factor for the development of T follicular helper (Tfh) cells that are required for the induction of germinal-center formation. Together with IL21, controls the early generation of Tfh cells and are critical for an effective antibody response to acute viral infection. Required to drive naive CD4(+) T cells to the Th17 lineage, through 'cluster signaling' by dendritic cells. Also required for proliferation of myeloma cells and the survival of plasmablast cells. Acts as an essential factor in bone homeostasis and on vessels directly or indirectly by induction of VEGF, resulting in increased angiogenesis activity and vascular permeability. Induces, through 'trans-signaling' and synergistically with IL1B and TNF, the production of VEGF. Involved in metabolic controls, is discharged into the bloodstream after muscle contraction increasing lipolysis and improving insulin resistance. 'Trans-signaling' in central nervous system regulates energy and glucose homeostasis. Mediates, through GLP-1, crosstalk between insulin-sensitive tissues, intestinal L cells and pancreatic islets to adapt to changes in insulin demand. Also acts as a myokine. Plays a protective role during liver injury, being required for maintenance of tissue regeneration. Also has a pivotal role in iron metabolism by regulating HAMP/hepcidin expression upon inflammation or bacterial infection. Through activation of IL6ST-YAP-NOTCH pathway, induces inflammation-induced epithelial regeneration. This Mus musculus (Mouse) protein is Interleukin-6.